A 730-amino-acid polypeptide reads, in one-letter code: Heterogeneous nuclear ribonucleoprotein M (730 aa).

The segment covering 1 to 13 has biased composition (low complexity); that stretch reads MAAGVEAAAEVAA. Positions 1 to 62 are disordered; sequence MAAGVEAAAE…NIKRGGNRFE (62 aa). An N-acetylalanine modification is found at Ala2. Residue Lys17 forms a Glycyl lysine isopeptide (Lys-Gly) (interchain with G-Cter in SUMO2) linkage. Position 29 is a phosphoserine (Ser29). Lys37 participates in a covalent cross-link: Glycyl lysine isopeptide (Lys-Gly) (interchain with G-Cter in SUMO2). The segment covering 38–50 has biased composition (basic and acidic residues); the sequence is GEGERPAQNEKRK. Residues Lys69 and Lys83 each participate in a glycyl lysine isopeptide (Lys-Gly) (interchain with G-Cter in SUMO2) cross-link. RRM domains follow at residues 71–149 and 204–281; these read YRAF…EDPD and STVF…MDER. Residue Ser86 is modified to Phosphoserine. Glycyl lysine isopeptide (Lys-Gly) (interchain with G-Cter in SUMO2) cross-links involve residues Lys88 and Lys127. Residue Lys134 is modified to N6-acetyllysine; alternate. Lys134 is covalently cross-linked (Glycyl lysine isopeptide (Lys-Gly) (interchain with G-Cter in SUMO2); alternate). Residues Lys143 and Lys145 each participate in a glycyl lysine isopeptide (Lys-Gly) (interchain with G-Cter in SUMO2) cross-link. Position 204 is a phosphoserine (Ser204). Lys221 participates in a covalent cross-link: Glycyl lysine isopeptide (Lys-Gly) (interchain with G-Cter in SUMO2). Lys277 carries the post-translational modification N6-acetyllysine; alternate. Lys277 is covalently cross-linked (Glycyl lysine isopeptide (Lys-Gly) (interchain with G-Cter in SUMO2); alternate). Residues Lys285 and Lys345 each participate in a glycyl lysine isopeptide (Lys-Gly) (interchain with G-Cter in SUMO2) cross-link. Phosphoserine occurs at positions 365 and 377. Residues Lys381 and Lys388 each participate in a glycyl lysine isopeptide (Lys-Gly) (interchain with G-Cter in SUMO2) cross-link. The residue at position 397 (Ser397) is a Phosphoserine. Repeat copies occupy residues 400 to 405, 407 to 412, 415 to 420, and 426 to 431. Residues 400 to 608 are 27 X 6 AA repeats of [GEVSTPAN]-[ILMV]-[DE]-[RH]-[MLVI]-[GAV]; it reads GIERMGPGID…ALGAGIERMG (209 aa). Ser432 carries the phosphoserine modification. Repeat copies occupy residues 433–438, 440–445, and 446–451. At Ser452 the chain carries Phosphoserine. 4 tandem repeats follow at residues 453 to 458, 461 to 466, 468 to 473, and 475 to 480. Phosphoserine is present on Ser468. Ser481 is subject to Phosphoserine. 16 tandem repeats follow at residues 482 to 487, 493 to 498, 500 to 505, 507 to 512, 514 to 519, 521 to 526, 528 to 533, 540 to 545, 547 to 552, 554 to 559, 562 to 566, 567 to 572, 575 to 579, 580 to 585, 588 to 593, and 603 to 608. Arg496 is subject to Omega-N-methylarginine. At Ser528 the chain carries Phosphoserine. Ser575 bears the Phosphoserine mark. Ser588 is modified (phosphoserine). 3 positions are modified to phosphoserine: Ser618, Ser633, and Ser637. Residue Lys651 forms a Glycyl lysine isopeptide (Lys-Gly) (interchain with G-Cter in SUMO2) linkage. The 77-residue stretch at 653 to 729 folds into the RRM 3 domain; that stretch reads CQIFVRNLPF…REIDVRIDRN (77 aa). Phosphothreonine is present on Thr665. A Glycyl lysine isopeptide (Lys-Gly) (interchain with G-Cter in SUMO2) cross-link involves residue Lys667. Lys672 carries the post-translational modification N6-acetyllysine. Residues Lys685 and Lys692 each participate in a glycyl lysine isopeptide (Lys-Gly) (interchain with G-Cter in SUMO2) cross-link. Lys698 bears the N6-acetyllysine; alternate mark. Residue Lys698 forms a Glycyl lysine isopeptide (Lys-Gly) (interchain with G-Cter in SUMO2); alternate linkage. Lys698 participates in a covalent cross-link: Glycyl lysine isopeptide (Lys-Gly) (interchain with G-Cter in SUMO1); alternate. The residue at position 701 (Ser701) is a Phosphoserine. Lys716 participates in a covalent cross-link: Glycyl lysine isopeptide (Lys-Gly) (interchain with G-Cter in SUMO2).

As to quaternary structure, identified in the spliceosome C complex. Interacts with PPIA/CYPA. In terms of processing, sumoylated.

The protein resides in the nucleus. The protein localises to the nucleolus. Its function is as follows. Pre-mRNA binding protein in vivo, binds avidly to poly(G) and poly(U) RNA homopolymers in vitro. Involved in splicing. Acts as a receptor for carcinoembryonic antigen in Kupffer cells, may initiate a series of signaling events leading to tyrosine phosphorylation of proteins and induction of IL-1 alpha, IL-6, IL-10 and tumor necrosis factor alpha cytokines. The protein is Heterogeneous nuclear ribonucleoprotein M (HNRNPM) of Homo sapiens (Human).